We begin with the raw amino-acid sequence, 1303 residues long: Endoplasmic reticulum transmembrane helix translocase spfA (1303 aa).

2 helical membrane-spanning segments follow: residues 25–45 (LHAYVWPFLIIWPAFFAVYLS) and 57–77 (EWTFVWSGSIITAQSLLWLMT). The tract at residues 158–191 (KPPVKVFQQAQGLTSKEEIDRIQHHYGDNTFDIP) is A-domain; part 1. Helical transmembrane passes span 201 to 221 (EHAVAPFFVFQVFCVGLWMLD) and 223 to 243 (YWYYSLFTLFMLVVFESTVVW). Residues 256-408 (NIKPYDVWVY…LVRTMIYSTE (153 aa)) are A-domain; part 2. Asparagine 287 is a glycosylation site (N-linked (GlcNAc...) asparagine). The chain crosses the membrane as a helical span at residues 415–435 (VEALLFILFLLIFAIAAAWYV). N-linked (GlcNAc...) asparagine glycosylation occurs at asparagine 474. The tract at residues 484–513 (AIFCTEPFRIPFAGRVDVACFDKTGTLTGE) is P-domain; part 1. The 4-aspartylphosphate intermediate role is filled by aspartate 505. Aspartate 505 and threonine 507 together coordinate Mg(2+). 505–507 (DKT) serves as a coordination point for ATP. The segment at 515-721 (LVVDGIAGLT…FAGFLVLQCP (207 aa)) is N-domain. N-linked (GlcNAc...) asparagine glycosylation occurs at asparagine 589. Residues phenylalanine 616 and arginine 678 each coordinate ATP. Positions 724–883 (EDAIKAVRML…HVGVALLNGS (160 aa)) are P-domain; part 2. Asparagine 734 is a glycosylation site (N-linked (GlcNAc...) asparagine). ATP is bound by residues aspartate 746 and 862-866 (DGTND). Residue aspartate 862 participates in Mg(2+) binding. Positions 884 to 1019 (PEDLAKIAEH…ELDDSEPPTI (136 aa)) are arm-like. A glycan (N-linked (GlcNAc...) asparagine) is linked at asparagine 958. Positions 1020–1035 (KLGDASVAAPFTSKLA) are P-domain; part 3. A run of 5 helical transmembrane segments spans residues 1060-1080 (ILALNCLISAYSLSVIYLDGI), 1082-1102 (FGDGQVTISGMLMSVCFLSIS), 1122-1142 (VYIIGSVLGQFAIHIATLIYL), 1201-1221 (AMYWGLVAASGVAFSCATEFI), and 1239-1259 (VTLTVLMIIDYAGCWIIENVL). The tract at residues 1277–1303 (DQLQREMERKKQEELETQAEKERQRKV) is disordered.

This sequence belongs to the cation transport ATPase (P-type) (TC 3.A.3) family. Type V subfamily. Requires Mg(2+) as cofactor.

It localises to the endoplasmic reticulum membrane. The catalysed reaction is [protein]-with a C-terminal TM segment(out) + ATP + H2O = [protein]-with a C-terminal TM segment(in) + ADP + phosphate + H(+). Its activity is regulated as follows. The ATPase activity is stimulated by phosphatidylinositol 4-phosphate (PI4P). Functionally, endoplasmic reticulum (ER) translocase required to remove mitochondrial transmembrane proteins mistargeted to the endoplasmic reticulum. Acts as a dislocase that mediates the ATP-dependent extraction of mislocalized mitochondrial transmembrane proteins from the endoplasmic reticulum membrane. Works in concert with the ER Ca(2+) pump srcA to support ER homeostasis. With srcA, also supports redox homeostasis and virulence. In Aspergillus fumigatus (strain ATCC MYA-4609 / CBS 101355 / FGSC A1100 / Af293) (Neosartorya fumigata), this protein is Endoplasmic reticulum transmembrane helix translocase spfA.